Here is a 318-residue protein sequence, read N- to C-terminus: Ornithine carbamoyltransferase (318 aa).

Residues Ser-63–Thr-66, Gln-90, Arg-114, and His-141–Gln-144 contribute to the carbamoyl phosphate site. L-ornithine is bound by residues Asn-172, Asp-235, and Ser-239–Met-240. Carbamoyl phosphate-binding positions include Cys-275 to Leu-276 and Arg-303.

Belongs to the aspartate/ornithine carbamoyltransferase superfamily. OTCase family.

Its subcellular location is the cytoplasm. It carries out the reaction carbamoyl phosphate + L-ornithine = L-citrulline + phosphate + H(+). Its pathway is amino-acid biosynthesis; L-arginine biosynthesis; L-arginine from L-ornithine and carbamoyl phosphate: step 1/3. Reversibly catalyzes the transfer of the carbamoyl group from carbamoyl phosphate (CP) to the N(epsilon) atom of ornithine (ORN) to produce L-citrulline. This chain is Ornithine carbamoyltransferase, found in Prochlorococcus marinus (strain MIT 9313).